Consider the following 297-residue polypeptide: MKSSQTLVYSIPRNVEKDTCAAAIKAYQYLISPPPSPIPNDKVASTVDVPKCSTIPESPKDSIVEPKPTATPVAQLHSKVYDLYRDSPKIWLRRERQWLQRHSPAYRFSTPAAKRPRRQPSSFLDVHASNTRKRGSPDTPDSGHSTPHSKGDVHPGMPQHNTRFKQSSREFSSNTQAIDVANTPYELLPDYSPDMSVLDKRSHPRPLRSEWKGPPLDLSNDENRHLLHPAELQLAATLRLPCLVYLDNKRRIFAEWHNRRTQGLSFRKTDAQRASRVDVNKASRLWKAFHDEGFFDD.

2 disordered regions span residues 50–70 (PKCS…KPTA) and 109–173 (STPA…EFSS). Polar residues predominate over residues 159-173 (QHNTRFKQSSREFSS). Positions 207–297 (LRSEWKGPPL…AFHDEGFFDD (91 aa)) constitute an SWIRM domain.

Component of the RPD3C(L) complex.

The protein localises to the nucleus. Its function is as follows. Component of the RPD3C(L) histone deacetylase complex (HDAC) responsible for the deacetylation of lysine residues on the N-terminal part of the core histones (H2A, H2B, H3 and H4). Histone deacetylation gives a tag for epigenetic repression and plays an important role in transcriptional regulation, cell cycle progression and developmental events. This chain is SWIRM domain-containing protein laf1 (laf1), found in Schizosaccharomyces pombe (strain 972 / ATCC 24843) (Fission yeast).